The following is a 293-amino-acid chain: 4-hydroxybenzoate octaprenyltransferase (293 aa).

8 helical membrane-spanning segments follow: residues 19–39, 43–63, 95–115, 135–155, 158–178, 209–229, 231–251, and 266–286; these read PIGI…ASNG, WLIL…GCVV, LLAA…NALV, FFAI…PMSY, LWGE…FWAI, LTAI…VGAL, DFSG…VYHL, and FLHN…HFLL.

It belongs to the UbiA prenyltransferase family. Mg(2+) serves as cofactor.

It is found in the cell inner membrane. It catalyses the reaction all-trans-octaprenyl diphosphate + 4-hydroxybenzoate = 4-hydroxy-3-(all-trans-octaprenyl)benzoate + diphosphate. It functions in the pathway cofactor biosynthesis; ubiquinone biosynthesis. Its function is as follows. Catalyzes the prenylation of para-hydroxybenzoate (PHB) with an all-trans polyprenyl group. Mediates the second step in the final reaction sequence of ubiquinone-8 (UQ-8) biosynthesis, which is the condensation of the polyisoprenoid side chain with PHB, generating the first membrane-bound Q intermediate 3-octaprenyl-4-hydroxybenzoate. In Thiobacillus denitrificans (strain ATCC 25259 / T1), this protein is 4-hydroxybenzoate octaprenyltransferase.